We begin with the raw amino-acid sequence, 228 residues long: RNA-free ribonuclease P (228 aa).

The protein belongs to the HARP family.

It catalyses the reaction Endonucleolytic cleavage of RNA, removing 5'-extranucleotides from tRNA precursor.. Functionally, RNA-free RNase P that catalyzes the removal of the 5'-leader sequence from pre-tRNA to produce the mature 5'-terminus. The polypeptide is RNA-free ribonuclease P (Methanopyrus kandleri (strain AV19 / DSM 6324 / JCM 9639 / NBRC 100938)).